Reading from the N-terminus, the 173-residue chain is NADH-ubiquinone oxidoreductase chain 6 (173 aa).

4 helical membrane-spanning segments follow: residues 12 to 32 (VFWLIGVSSNISVYYGVVSLV), 47 to 67 (GSFLALVLFLIYLGGMLVIFA), 94 to 114 (VVLAVVFVLVGWGWWGVGECG), and 142 to 162 (GALMMAMFGLFLTFFIVLVLV).

The protein belongs to the complex I subunit 6 family.

The protein resides in the mitochondrion membrane. It catalyses the reaction a ubiquinone + NADH + 5 H(+)(in) = a ubiquinol + NAD(+) + 4 H(+)(out). Its function is as follows. Core subunit of the mitochondrial membrane respiratory chain NADH dehydrogenase (Complex I) that is believed to belong to the minimal assembly required for catalysis. Complex I functions in the transfer of electrons from NADH to the respiratory chain. The immediate electron acceptor for the enzyme is believed to be ubiquinone. This is NADH-ubiquinone oxidoreductase chain 6 (MT-ND6) from Pelomedusa subrufa (African side-necked turtle).